Consider the following 411-residue polypeptide: CinA-like protein (411 aa).

The protein belongs to the CinA family.

The chain is CinA-like protein from Dictyoglomus turgidum (strain DSM 6724 / Z-1310).